Reading from the N-terminus, the 204-residue chain is Somatotropin (204 aa).

An N-terminal signal peptide occupies residues 1 to 17 (MDRVVLMLSVLSLGVSS). The residue at position 18 (Gln18) is a Pyrrolidone carboxylic acid. A Zn(2+)-binding site is contributed by His36. A disulfide bond links Cys69 and Cys177. A Zn(2+)-binding site is contributed by Glu186. Cys194 and Cys202 are disulfide-bonded.

Belongs to the somatotropin/prolactin family.

It localises to the secreted. Growth hormone plays an important role in growth control and is involved in the regulation of several anabolic processes. Implicated as an osmoregulatory substance important for seawater adaptation. This is Somatotropin (gh) from Acanthopagrus butcheri (Australian black bream).